Consider the following 377-residue polypeptide: Nitric oxide reductase FlRd-NAD(+) reductase (377 aa).

The protein belongs to the FAD-dependent oxidoreductase family. FAD is required as a cofactor.

It localises to the cytoplasm. The enzyme catalyses 2 reduced [nitric oxide reductase rubredoxin domain] + NAD(+) + H(+) = 2 oxidized [nitric oxide reductase rubredoxin domain] + NADH. The protein operates within nitrogen metabolism; nitric oxide reduction. Functionally, one of at least two accessory proteins for anaerobic nitric oxide (NO) reductase. Reduces the rubredoxin moiety of NO reductase. In Salmonella paratyphi C (strain RKS4594), this protein is Nitric oxide reductase FlRd-NAD(+) reductase.